A 40-amino-acid chain; its full sequence is Photosystem II reaction center protein J (40 aa).

Residues L10–Y30 traverse the membrane as a helical segment.

Belongs to the PsbJ family. In terms of assembly, PSII is composed of 1 copy each of membrane proteins PsbA, PsbB, PsbC, PsbD, PsbE, PsbF, PsbH, PsbI, PsbJ, PsbK, PsbL, PsbM, PsbT, PsbX, PsbY, PsbZ, Psb30/Ycf12, at least 3 peripheral proteins of the oxygen-evolving complex and a large number of cofactors. It forms dimeric complexes.

It is found in the plastid. The protein localises to the chloroplast thylakoid membrane. One of the components of the core complex of photosystem II (PSII). PSII is a light-driven water:plastoquinone oxidoreductase that uses light energy to abstract electrons from H(2)O, generating O(2) and a proton gradient subsequently used for ATP formation. It consists of a core antenna complex that captures photons, and an electron transfer chain that converts photonic excitation into a charge separation. The polypeptide is Photosystem II reaction center protein J (Marchantia polymorpha (Common liverwort)).